Consider the following 986-residue polypeptide: Ankyrin repeat, PH and SEC7 domain containing protein secG (986 aa).

Over residues 1-28 (MGSTSNSTKNTGSTTTTTTTAAPATTAK) the composition is skewed to low complexity. Residues 1-43 (MGSTSNSTKNTGSTTTTTTTAAPATTAKHSNSAPTRPSVHYYS) form a disordered region. Residues 29-43 (HSNSAPTRPSVHYYS) are compositionally biased toward polar residues. ANK repeat units lie at residues 34–63 (PTRP…TSPD), 68–97 (EKRT…NANI), 101–131 (AGNT…DVNT), 135–164 (KNGT…DPRA), 168–197 (NGET…KVNA), 201–230 (DCIT…KVDP), 234–263 (HGIS…NINC), 267–296 (EGVT…KINM), 300–329 (MGET…TMID), 334–363 (RQST…QINI), 367–396 (EGAT…PICI), 400–429 (QGAT…ELEV), 433–462 (QGGT…NVNA), 466–495 (HSST…RIDA), and 499–528 (AGKT…DLDQ). The SEC7 domain maps to 580-770 (QLAAEKQKLL…ENLYDKIVTN (191 aa)). In terms of domain architecture, PH spans 784 to 895 (HVEKKGWLTK…WVQSIKSNIH (112 aa)). The tract at residues 911-986 (IRGRGKVSTK…PVQQQTSALS (76 aa)) is disordered. A compositionally biased stretch (polar residues) spans 920–929 (KPIQNRKQTI). Composition is skewed to low complexity over residues 936–953 (TTTT…SVGS) and 963–986 (SSGS…SALS).

The protein is Ankyrin repeat, PH and SEC7 domain containing protein secG (secG) of Dictyostelium discoideum (Social amoeba).